The following is a 171-amino-acid chain: Histone H1, gonadal (171 aa).

2 disordered regions span residues 1–40 (AASPQKRAASPRKSPKKSPRKSPKKKSPRKRKARSAAHPP) and 133–171 (AKAKKAKAAARRKAAAAKRKAAAAKRRAAKKARKAKAKP). Positions 9–35 (ASPRKSPKKSPRKSPKKKSPRKRKARS) are enriched in basic residues. In terms of domain architecture, H15 spans 37–111 (AHPPVIDMIT…GATGRFRVGA (75 aa)).

This sequence belongs to the histone H1/H5 family. Sperm.

It is found in the nucleus. The protein localises to the chromosome. Its function is as follows. Histones H1 are necessary for the condensation of nucleosome chains into higher-order structures. The sequence is that of Histone H1, gonadal from Echinolampas crassa (Sea urchin).